Here is a 78-residue protein sequence, read N- to C-terminus: MNLGLAILLIVLAFAGGVALGIYLSRRQVENYIADKPILDENALRLMMSQMGQKPSEAKVQQVLRQIKSQQKVASKKK.

A helical transmembrane segment spans residues 3-23; that stretch reads LGLAILLIVLAFAGGVALGIY.

Belongs to the UPF0154 family.

Its subcellular location is the cell membrane. This is UPF0154 protein SSU98_1719 from Streptococcus suis (strain 98HAH33).